The sequence spans 273 residues: Release factor glutamine methyltransferase (273 aa).

Residues 109–113 (GTGSG), D132, W159, and N176 each bind S-adenosyl-L-methionine. 176-179 (NPPY) is a binding site for substrate.

The protein belongs to the protein N5-glutamine methyltransferase family. PrmC subfamily.

The enzyme catalyses L-glutaminyl-[peptide chain release factor] + S-adenosyl-L-methionine = N(5)-methyl-L-glutaminyl-[peptide chain release factor] + S-adenosyl-L-homocysteine + H(+). Its function is as follows. Methylates the class 1 translation termination release factors RF1/PrfA and RF2/PrfB on the glutamine residue of the universally conserved GGQ motif. This chain is Release factor glutamine methyltransferase, found in Neisseria gonorrhoeae (strain ATCC 700825 / FA 1090).